The following is a 538-amino-acid chain: Putative cysteine ligase BshC (538 aa).

Residues 421 to 485 are a coiled coil; sequence VEEKFQEAKK…LERRHEVELN (65 aa).

The protein belongs to the BshC family.

Its function is as follows. Involved in bacillithiol (BSH) biosynthesis. May catalyze the last step of the pathway, the addition of cysteine to glucosamine malate (GlcN-Mal) to generate BSH. The polypeptide is Putative cysteine ligase BshC (Bacillus cytotoxicus (strain DSM 22905 / CIP 110041 / 391-98 / NVH 391-98)).